Consider the following 803-residue polypeptide: Protein translocase subunit SecA (803 aa).

ATP is bound by residues glutamine 100, 118 to 122, and aspartate 508; that span reads GEGKT.

This sequence belongs to the SecA family. Monomer and homodimer. Part of the essential Sec protein translocation apparatus which comprises SecA, SecYEG and auxiliary proteins SecDF. Other proteins may also be involved.

It is found in the cell membrane. It localises to the cytoplasm. The catalysed reaction is ATP + H2O + cellular proteinSide 1 = ADP + phosphate + cellular proteinSide 2.. Functionally, part of the Sec protein translocase complex. Interacts with the SecYEG preprotein conducting channel. Has a central role in coupling the hydrolysis of ATP to the transfer of proteins into and across the cell membrane, serving as an ATP-driven molecular motor driving the stepwise translocation of polypeptide chains across the membrane. In Leuconostoc mesenteroides subsp. mesenteroides (strain ATCC 8293 / DSM 20343 / BCRC 11652 / CCM 1803 / JCM 6124 / NCDO 523 / NBRC 100496 / NCIMB 8023 / NCTC 12954 / NRRL B-1118 / 37Y), this protein is Protein translocase subunit SecA.